An 86-amino-acid polypeptide reads, in one-letter code: Large ribosomal subunit protein bL31B (86 aa).

The protein belongs to the bacterial ribosomal protein bL31 family. Type B subfamily. Part of the 50S ribosomal subunit.

The chain is Large ribosomal subunit protein bL31B from Yersinia enterocolitica serotype O:8 / biotype 1B (strain NCTC 13174 / 8081).